Here is a 243-residue protein sequence, read N- to C-terminus: Ribosomal RNA small subunit methyltransferase G (243 aa).

S-adenosyl-L-methionine is bound by residues Gly97, Leu102, Val148–Glu149, and Arg161.

It belongs to the methyltransferase superfamily. RNA methyltransferase RsmG family.

The protein resides in the cytoplasm. The enzyme catalyses guanosine(527) in 16S rRNA + S-adenosyl-L-methionine = N(7)-methylguanosine(527) in 16S rRNA + S-adenosyl-L-homocysteine. In terms of biological role, specifically methylates the N7 position of guanine in position 527 of 16S rRNA. In Paracidovorax citrulli (strain AAC00-1) (Acidovorax citrulli), this protein is Ribosomal RNA small subunit methyltransferase G.